The chain runs to 420 residues: Dachshund homolog dac-1 (420 aa).

The interval 23–77 (PSSSSSSSNNSSSNTSSSNFLSPYEYQESSTSPRDTTDSSGESSLSSSGSSSSLN) is disordered. Low complexity-rich tracts occupy residues 24–41 (SSSS…SSSN) and 51–77 (SSTS…SSLN). Residues 85–171 (KLIKFRGHNV…LLKTSDFEKL (87 aa)) form a DACHbox-N region. Residues 242 to 258 (NSFERADDDDQNQRDAD) show a composition bias toward basic and acidic residues. The disordered stretch occupies residues 242–321 (NSFERADDDD…SSSSSGKNDE (80 aa)). Positions 263–273 (LNLSKSGGNSE) are enriched in polar residues. Over residues 297–317 (GGSNSNSLSMSMEAGSSSSSG) the composition is skewed to low complexity.

Belongs to the DACH/dachshund family. In terms of tissue distribution, expressed in AFD, AWC, ASE and ASK neurons. Expressed in the alae.

It is found in the nucleus. Functionally, transcription factor. Plays a role in the thermotactic response. This chain is Dachshund homolog dac-1, found in Caenorhabditis elegans.